Consider the following 181-residue polypeptide: Bifunctional adenosylcobalamin biosynthesis protein CobU (181 aa).

Residues 7–14 and 31–33 contribute to the GTP site; these read GGARSGKS and ATS. His-47 serves as the catalytic GMP-histidine intermediate. GTP-binding positions include 48–51, Glu-59, and Glu-81; that span reads KDGR.

The protein belongs to the CobU/CobP family. As to quaternary structure, homotrimer.

The enzyme catalyses adenosylcob(III)inamide + GTP = adenosylcob(III)inamide phosphate + GDP + H(+). The catalysed reaction is adenosylcob(III)inamide + ATP = adenosylcob(III)inamide phosphate + ADP + H(+). It catalyses the reaction adenosylcob(III)inamide phosphate + GTP + H(+) = adenosylcob(III)inamide-GDP + diphosphate. The protein operates within cofactor biosynthesis; adenosylcobalamin biosynthesis; adenosylcobalamin from cob(II)yrinate a,c-diamide: step 5/7. It functions in the pathway cofactor biosynthesis; adenosylcobalamin biosynthesis; adenosylcobalamin from cob(II)yrinate a,c-diamide: step 6/7. Its function is as follows. Catalyzes ATP-dependent phosphorylation of adenosylcobinamide and addition of GMP to adenosylcobinamide phosphate. This Salmonella typhimurium (strain LT2 / SGSC1412 / ATCC 700720) protein is Bifunctional adenosylcobalamin biosynthesis protein CobU (cobU).